A 323-amino-acid polypeptide reads, in one-letter code: RNA polymerase sigma factor SigB (323 aa).

Positions 1–228 (MADAPTRATT…DMPVGSEEEA (228 aa)) are sufficient to interact with RbpA. Positions 25 to 59 (DLVRVYLNGIGKTALLNAAGEVELAKRIEAGLYAE) are sigma-70 factor domain-1. Residues 90-160 (LLEANLRLVV…TRGMADQSRT (71 aa)) form a sigma-70 factor domain-2 region. A Polymerase core binding motif is present at residues 114–117 (DLIQ). The segment at 169 to 245 (EQVNKLARIK…DAEAMSAENA (77 aa)) is sigma-70 factor domain-3. A sigma-70 factor domain-4 region spans residues 258–311 (VLATLDEREHQVIRLRFGLDDGQPRTLDQIGKLFGLSRERVRQIERDVMSKLRH). Residues 284–303 (LDQIGKLFGLSRERVRQIER) constitute a DNA-binding region (H-T-H motif).

Belongs to the sigma-70 factor family. Monomer. Interacts transiently with the RNA polymerase catalytic core formed by RpoA, RpoB, RpoC and RpoZ (2 alpha, 1 beta, 1 beta' and 1 omega subunit) to form the RNA polymerase holoenzyme that can initiate transcription.

Functionally, sigma factors are initiation factors that promote the attachment of RNA polymerase to specific initiation sites and are then released. A non-essential principal sigma factor that responds to cell envelope stress and hypoxia. The sequence is that of RNA polymerase sigma factor SigB (sigB) from Mycobacterium tuberculosis (strain CDC 1551 / Oshkosh).